The primary structure comprises 111 residues: Thioredoxin 2 (111 aa).

A Thioredoxin domain is found at 2 to 109 (SKGVITITDA…LLSFLDTHLN (108 aa)). A disulfide bridge connects residues cysteine 33 and cysteine 36.

The protein belongs to the thioredoxin family.

Functionally, participates in various redox reactions through the reversible oxidation of its active center dithiol to a disulfide and catalyzes dithiol-disulfide exchange reactions. The protein is Thioredoxin 2 (trxB) of Nostoc sp. (strain PCC 7120 / SAG 25.82 / UTEX 2576).